The chain runs to 208 residues: Outer-membrane lipoprotein carrier protein (208 aa).

The signal sequence occupies residues 1 to 22 (MKNLLCAVMLTSPLLYSTAVFA).

Belongs to the LolA family. As to quaternary structure, monomer.

It localises to the periplasm. In terms of biological role, participates in the translocation of lipoproteins from the inner membrane to the outer membrane. Only forms a complex with a lipoprotein if the residue after the N-terminal Cys is not an aspartate (The Asp acts as a targeting signal to indicate that the lipoprotein should stay in the inner membrane). This Shewanella putrefaciens (strain CN-32 / ATCC BAA-453) protein is Outer-membrane lipoprotein carrier protein.